A 212-amino-acid chain; its full sequence is 2-C-methyl-D-erythritol 4-phosphate cytidylyltransferase (212 aa).

This sequence belongs to the IspD/TarI cytidylyltransferase family. IspD subfamily.

It catalyses the reaction 2-C-methyl-D-erythritol 4-phosphate + CTP + H(+) = 4-CDP-2-C-methyl-D-erythritol + diphosphate. Its pathway is isoprenoid biosynthesis; isopentenyl diphosphate biosynthesis via DXP pathway; isopentenyl diphosphate from 1-deoxy-D-xylulose 5-phosphate: step 2/6. Functionally, catalyzes the formation of 4-diphosphocytidyl-2-C-methyl-D-erythritol from CTP and 2-C-methyl-D-erythritol 4-phosphate (MEP). The polypeptide is 2-C-methyl-D-erythritol 4-phosphate cytidylyltransferase (Chlamydia caviae (strain ATCC VR-813 / DSM 19441 / 03DC25 / GPIC) (Chlamydophila caviae)).